A 240-amino-acid chain; its full sequence is Nicotinamide riboside kinase (240 aa).

Position 13–21 (13–21 (GCSSSGKTT)) interacts with ATP. Positions 20 and 39 each coordinate Mg(2+). D39 functions as the Proton acceptor in the catalytic mechanism. Substrate is bound by residues 39–42 (DDFY) and 59–60 (WD). Residue R158 participates in ATP binding. Substrate is bound by residues R159 and 164 to 165 (GY). Residues 162–164 (RKG) and 208–210 (KSK) contribute to the ATP site.

This sequence belongs to the uridine kinase family. NRK subfamily.

It catalyses the reaction beta-nicotinamide D-riboside + ATP = beta-nicotinamide D-ribonucleotide + ADP + H(+). The enzyme catalyses beta-D-ribosylnicotinate + ATP = nicotinate beta-D-ribonucleotide + ADP + H(+). Its pathway is cofactor biosynthesis; NAD(+) biosynthesis. In terms of biological role, catalyzes the phosphorylation of nicotinamide riboside (NR) and nicotinic acid riboside (NaR) to form nicotinamide mononucleotide (NMN) and nicotinic acid mononucleotide (NaMN). This is Nicotinamide riboside kinase (NRK1) from Saccharomyces cerevisiae (strain ATCC 204508 / S288c) (Baker's yeast).